Reading from the N-terminus, the 393-residue chain is Sialyltransferase-like protein 1 (393 aa).

Topologically, residues 1–8 (MKRPLRRP) are cytoplasmic. Residues 9–27 (FAVLLFVVLCAAASFPSVL) traverse the membrane as a helical; Signal-anchor for type II membrane protein segment. Residues 28–393 (RRSVGPAPVL…IAVPPVVFYH (366 aa)) are Lumenal-facing. N-linked (GlcNAc...) asparagine glycans are attached at residues Asn49, Asn212, and Asn258.

This sequence belongs to the glycosyltransferase 29 family. In terms of tissue distribution, expressed in leaves and stalks. Expressed at low levels in roots.

It is found in the golgi apparatus membrane. Functionally, possesses sialyltransferase-like activity in vitro. Transfers sialic acid to the oligosaccharide Gal-beta-1,3-GalNAc and to glycoproteins such as asialofetuin, alpha-1-acid glycoprotein (NeuAc-alpha-2,3-Gal-beta-1,3-GalNAc-) and andasialo-alpha-1-acid glycoprotein. The transferred sialic acid is linked to galactose of Gal-beta-1,3-GalNAc through alpha-2,6-linkage. The sequence is that of Sialyltransferase-like protein 1 from Oryza sativa subsp. japonica (Rice).